The chain runs to 125 residues: Small ribosomal subunit protein bS6 (125 aa).

The interval 94–125 (KAETGASSMMKTVEREEARKASQAEFAASNER) is disordered. A compositionally biased stretch (basic and acidic residues) spans 105-115 (TVEREEARKAS).

It belongs to the bacterial ribosomal protein bS6 family.

Its function is as follows. Binds together with bS18 to 16S ribosomal RNA. The protein is Small ribosomal subunit protein bS6 of Acidovorax ebreus (strain TPSY) (Diaphorobacter sp. (strain TPSY)).